A 143-amino-acid polypeptide reads, in one-letter code: Large ribosomal subunit protein uL16c (143 aa).

Belongs to the universal ribosomal protein uL16 family. In terms of assembly, part of the 50S ribosomal subunit.

It is found in the plastid. The protein localises to the chloroplast. This Marchantia polymorpha (Common liverwort) protein is Large ribosomal subunit protein uL16c.